Here is a 347-residue protein sequence, read N- to C-terminus: Phenylalanine--tRNA ligase alpha subunit (347 aa).

Residue Glu-261 participates in Mg(2+) binding.

The protein belongs to the class-II aminoacyl-tRNA synthetase family. Phe-tRNA synthetase alpha subunit type 1 subfamily. In terms of assembly, tetramer of two alpha and two beta subunits. Mg(2+) is required as a cofactor.

It localises to the cytoplasm. It carries out the reaction tRNA(Phe) + L-phenylalanine + ATP = L-phenylalanyl-tRNA(Phe) + AMP + diphosphate + H(+). The protein is Phenylalanine--tRNA ligase alpha subunit of Streptococcus pyogenes serotype M3 (strain ATCC BAA-595 / MGAS315).